The chain runs to 554 residues: MSEAEARPTNFIRQIIDEDLASGKHTTVHTRFPPEPNGYLHIGHAKSICLNFGIAQDYKGQCNLRFDDTNPVKEDIEYVESIKNDVEWLGFHWSGNVRYSSDYFDQLHAYAIELINKGLAYVDELTPEQIREYRGTLTQPGKNSPYRDRSVEENLALFEKMRTGGFEEGKACLRAKIDMASPFIVMRDPVLYRIKFAEHHQTGNKWCIYPMYDFTHCISDALEGITHSLCTLEFQDNRRLYDWVLDNITIPVHPRQYEFSRLNLEYTVMSKRKLNLLVTDKHVEGWDDPRMPTISGLRRRGYTAASIREFCKRIGVTKQDNTIEMASLESCIREDLNENAPRAMAVIDPVKLVIENYQGEGEMVTMPNHPNKPEMGSRQVPFSGEIWIDRADFREEANKQYKRLVLGKEVRLRNAYVIKAERVEKDAEGNITTIFCTYDADTLSKDPADGRKVKGVIHWVSAAHALPVEIRLYDRLFSVPNPGAADDFLSVINPESLVIKQGFAEPSLKDAVAGKAFQFEREGYFCLDSRHSTAEKPVFNRTVGLRDTWAKVGE.

Residues 34 to 44 carry the 'HIGH' region motif; that stretch reads PEPNGYLHIGH. ATP is bound by residues 35-37 and 41-47; these read EPN and HIGHAKS. Residues Asp67 and Tyr212 each coordinate L-glutamine. ATP-binding positions include Thr231, 261-262, and 269-271; these read RL and MSK. The 'KMSKS' region motif lies at 268-272; the sequence is VMSKR. The interaction with tRNA stretch occupies residues 317–324; that stretch reads TKQDNTIE.

This sequence belongs to the class-I aminoacyl-tRNA synthetase family. In terms of assembly, monomer.

It localises to the cytoplasm. It catalyses the reaction tRNA(Gln) + L-glutamine + ATP = L-glutaminyl-tRNA(Gln) + AMP + diphosphate. The chain is Glutamine--tRNA ligase from Escherichia coli O17:K52:H18 (strain UMN026 / ExPEC).